The following is a 117-amino-acid chain: Gamma-aminobutyric acid receptor-associated protein-like 2 (117 aa).

Residue Lys-24 is modified to N6-acetyllysine. Residues Ser-39, Ser-87, and Ser-88 each carry the phosphoserine modification. A lipid anchor (Phosphatidylethanolamine amidated glycine; alternate) is attached at Gly-116. A lipid anchor (Phosphatidylserine amidated glycine; alternate) is attached at Gly-116. A propeptide (removed in mature form) is located at residue Phe-117.

Belongs to the ATG8 family. In terms of assembly, monomer. Interacts with ATG3, ATG7, ATG13 and ULK1. Interacts with TP53INP1 and TP53INP2. Interacts with TBC1D25. Directly interacts with SQSTM1 and BNIP3. Interacts with TECPR2 and PCM1. Interacts with TBC1D5. Interacts with TRIM5. Interacts with MEFV and TRIM21. Interacts with WDFY3. Interacts with UBA5; promoting recruitment of UBA5 to the endoplasmic reticulum membrane. Interacts with GOSR1. Interacts with KBTBD6 and KBTBD7; the interaction is direct. Interacts with reticulophagy regulators RETREG1, RETREG2 and RETREG3. Interacts with IRGM. Interacts with DNM2. Interacts with NCOA4. Interacts with IRGQ. Post-translationally, the precursor molecule is cleaved by ATG4 (ATG4A, ATG4B, ATG4C or ATG4D) to expose the glycine at the C-terminus and form the cytosolic form, GABARAPL2-I. The processed form is then activated by APG7L/ATG7, transferred to ATG3 and conjugated to phosphatidylethanolamine (PE) phospholipid to form the membrane-bound form, GABARAPL2-II. During non-canonical autophagy, the processed form is conjugated to phosphatidylserine (PS) phospholipid. ATG4 proteins also mediate the delipidation of PE-conjugated forms required for GABARAPL2 recycling when autophagosomes fuse with lysosomes. In addition, ATG4B and ATG4D mediate delipidation of ATG8 proteins conjugated to PS during non-canonical autophagy. ATG4B constitutes the major protein for proteolytic activation. ATG4D is the main enzyme for delipidation activity. In terms of processing, phosphorylation at Ser-87 and Ser-88 by TBK1 prevents interaction with ATG4 (ATG4A, ATG4B, ATG4C or ATG4D). Phosphorylation by TBK1 on autophagosomes prevents their delipidation by ATG4 and premature removal from nascent autophagosomes. In terms of tissue distribution, ubiquitous. Expressed at high levels in the brain, heart, prostate, ovary, spleen and skeletal muscle. Expressed at very low levels in lung, thymus and small intestine.

The protein resides in the cytoplasmic vesicle. Its subcellular location is the autophagosome. It localises to the endoplasmic reticulum membrane. The protein localises to the golgi apparatus. In terms of biological role, ubiquitin-like modifier involved in intra-Golgi traffic. Modulates intra-Golgi transport through coupling between NSF activity and SNAREs activation. It first stimulates the ATPase activity of NSF which in turn stimulates the association with GOSR1. Involved in autophagy. Plays a role in mitophagy which contributes to regulate mitochondrial quantity and quality by eliminating the mitochondria to a basal level to fulfill cellular energy requirements and preventing excess ROS production. Whereas LC3s are involved in elongation of the phagophore membrane, the GABARAP/GATE-16 subfamily is essential for a later stage in autophagosome maturation. The sequence is that of Gamma-aminobutyric acid receptor-associated protein-like 2 from Bos taurus (Bovine).